The primary structure comprises 557 residues: Dihydroxy-acid dehydratase (557 aa).

Cys50 contributes to the [2Fe-2S] cluster binding site. Asp82 lines the Mg(2+) pocket. Cys123 is a [2Fe-2S] cluster binding site. Residues Asp124 and Lys125 each contribute to the Mg(2+) site. At Lys125 the chain carries N6-carboxylysine. A [2Fe-2S] cluster-binding site is contributed by Cys195. Residue Glu447 coordinates Mg(2+). The Proton acceptor role is filled by Ser473.

The protein belongs to the IlvD/Edd family. As to quaternary structure, homodimer. It depends on [2Fe-2S] cluster as a cofactor. The cofactor is Mg(2+).

It catalyses the reaction (2R)-2,3-dihydroxy-3-methylbutanoate = 3-methyl-2-oxobutanoate + H2O. The catalysed reaction is (2R,3R)-2,3-dihydroxy-3-methylpentanoate = (S)-3-methyl-2-oxopentanoate + H2O. The protein operates within amino-acid biosynthesis; L-isoleucine biosynthesis; L-isoleucine from 2-oxobutanoate: step 3/4. Its pathway is amino-acid biosynthesis; L-valine biosynthesis; L-valine from pyruvate: step 3/4. In terms of biological role, functions in the biosynthesis of branched-chain amino acids. Catalyzes the dehydration of (2R,3R)-2,3-dihydroxy-3-methylpentanoate (2,3-dihydroxy-3-methylvalerate) into 2-oxo-3-methylpentanoate (2-oxo-3-methylvalerate) and of (2R)-2,3-dihydroxy-3-methylbutanoate (2,3-dihydroxyisovalerate) into 2-oxo-3-methylbutanoate (2-oxoisovalerate), the penultimate precursor to L-isoleucine and L-valine, respectively. In Ralstonia nicotianae (strain ATCC BAA-1114 / GMI1000) (Ralstonia solanacearum), this protein is Dihydroxy-acid dehydratase.